The sequence spans 478 residues: Ribulose bisphosphate carboxylase large chain (478 aa).

A propeptide spanning residues 1–2 (MS) is cleaved from the precursor. Proline 3 bears the N-acetylproline mark. N6,N6,N6-trimethyllysine is present on lysine 14. Residues asparagine 123 and threonine 173 each contribute to the substrate site. The active-site Proton acceptor is the lysine 175. Residue lysine 177 coordinates substrate. Positions 201, 203, and 204 each coordinate Mg(2+). At lysine 201 the chain carries N6-carboxylysine. Histidine 294 (proton acceptor) is an active-site residue. Positions 295, 327, and 379 each coordinate substrate.

Belongs to the RuBisCO large chain family. Type I subfamily. In terms of assembly, heterohexadecamer of 8 large chains and 8 small chains; disulfide-linked. The disulfide link is formed within the large subunit homodimers. Mg(2+) is required as a cofactor. The disulfide bond which can form in the large chain dimeric partners within the hexadecamer appears to be associated with oxidative stress and protein turnover.

It localises to the plastid. Its subcellular location is the chloroplast. The catalysed reaction is 2 (2R)-3-phosphoglycerate + 2 H(+) = D-ribulose 1,5-bisphosphate + CO2 + H2O. The enzyme catalyses D-ribulose 1,5-bisphosphate + O2 = 2-phosphoglycolate + (2R)-3-phosphoglycerate + 2 H(+). In terms of biological role, ruBisCO catalyzes two reactions: the carboxylation of D-ribulose 1,5-bisphosphate, the primary event in carbon dioxide fixation, as well as the oxidative fragmentation of the pentose substrate in the photorespiration process. Both reactions occur simultaneously and in competition at the same active site. The chain is Ribulose bisphosphate carboxylase large chain from Neurachne tenuifolia.